The primary structure comprises 639 residues: Probable methyltransferase PMT18 (639 aa).

The Cytoplasmic segment spans residues 1 to 19 (MAKENSSHSLAEAKRKRLT). A helical; Signal-anchor for type II membrane protein transmembrane segment spans residues 20-42 (WILCVSGLCILSYVLGSWQTNTV). A disordered region spans residues 41–86 (TVPTSSSEAYSRMGCDETSTTTRAQTTQTQTNPSSDDTSSSLSSSE). The Lumenal portion of the chain corresponds to 43-639 (PTSSSEAYSR…VKSYWTGPSS (597 aa)). A compositionally biased stretch (low complexity) spans 58–85 (TSTTTRAQTTQTQTNPSSDDTSSSLSSS). Asn-104 and Asn-427 each carry an N-linked (GlcNAc...) asparagine glycan.

This sequence belongs to the methyltransferase superfamily.

Its subcellular location is the endoplasmic reticulum membrane. The protein is Probable methyltransferase PMT18 of Arabidopsis thaliana (Mouse-ear cress).